The sequence spans 98 residues: Large ribosomal subunit protein bL27 (98 aa).

Polar residues predominate over residues 1-11 (MASKASGGSTR). Positions 1-20 (MASKASGGSTRNGRDSISKR) are disordered.

The protein belongs to the bacterial ribosomal protein bL27 family.

This is Large ribosomal subunit protein bL27 from Aquifex aeolicus (strain VF5).